The following is a 350-amino-acid chain: Tetraacyldisaccharide 4'-kinase (350 aa).

48-55 (SAGGTGKT) provides a ligand contact to ATP.

It belongs to the LpxK family.

It catalyses the reaction a lipid A disaccharide + ATP = a lipid IVA + ADP + H(+). It participates in glycolipid biosynthesis; lipid IV(A) biosynthesis; lipid IV(A) from (3R)-3-hydroxytetradecanoyl-[acyl-carrier-protein] and UDP-N-acetyl-alpha-D-glucosamine: step 6/6. In terms of biological role, transfers the gamma-phosphate of ATP to the 4'-position of a tetraacyldisaccharide 1-phosphate intermediate (termed DS-1-P) to form tetraacyldisaccharide 1,4'-bis-phosphate (lipid IVA). The chain is Tetraacyldisaccharide 4'-kinase from Chlorobium limicola (strain DSM 245 / NBRC 103803 / 6330).